A 495-amino-acid polypeptide reads, in one-letter code: tRNA modification GTPase MnmE (495 aa).

(6S)-5-formyl-5,6,7,8-tetrahydrofolate is bound by residues R28, E89, and K128. Residues 223–417 (GVRIVLGGCP…LRAQTLHLLH (195 aa)) enclose the TrmE-type G domain. N233 is a K(+) binding site. GTP is bound by residues 233 to 238 (NAGKSS), 252 to 258 (SSVPGTT), and 277 to 280 (DTAG). S237 contacts Mg(2+). The K(+) site is built by S252, V254, and T257. Residue T258 participates in Mg(2+) binding. K495 is a (6S)-5-formyl-5,6,7,8-tetrahydrofolate binding site.

This sequence belongs to the TRAFAC class TrmE-Era-EngA-EngB-Septin-like GTPase superfamily. TrmE GTPase family. As to quaternary structure, homodimer. Heterotetramer of two MnmE and two MnmG subunits. K(+) is required as a cofactor.

Its subcellular location is the cytoplasm. Functionally, exhibits a very high intrinsic GTPase hydrolysis rate. Involved in the addition of a carboxymethylaminomethyl (cmnm) group at the wobble position (U34) of certain tRNAs, forming tRNA-cmnm(5)s(2)U34. This Treponema pallidum (strain Nichols) protein is tRNA modification GTPase MnmE.